A 632-amino-acid polypeptide reads, in one-letter code: tRNA uridine 5-carboxymethylaminomethyl modification enzyme MnmG (632 aa).

FAD-binding positions include 15–20 (GAGHAG), isoleucine 127, and serine 182. 276–290 (GPRYCPSIEDKIVRF) lines the NAD(+) pocket. Residue glutamine 373 coordinates FAD.

This sequence belongs to the MnmG family. In terms of assembly, homodimer. Heterotetramer of two MnmE and two MnmG subunits. FAD serves as cofactor.

It localises to the cytoplasm. Functionally, NAD-binding protein involved in the addition of a carboxymethylaminomethyl (cmnm) group at the wobble position (U34) of certain tRNAs, forming tRNA-cmnm(5)s(2)U34. The sequence is that of tRNA uridine 5-carboxymethylaminomethyl modification enzyme MnmG from Streptococcus pyogenes serotype M3 (strain SSI-1).